Reading from the N-terminus, the 314-residue chain is DNA-directed RNA polymerase subunit alpha (314 aa).

The alpha N-terminal domain (alpha-NTD) stretch occupies residues 1-228; the sequence is MIEIEKPKIE…EHLNIFVGLT (228 aa). The interval 245-314 is alpha C-terminal domain (alpha-CTD); sequence KEKVMEMTIE…DLGLGLRDDD (70 aa).

The protein belongs to the RNA polymerase alpha chain family. As to quaternary structure, homodimer. The RNAP catalytic core consists of 2 alpha, 1 beta, 1 beta' and 1 omega subunit. When a sigma factor is associated with the core the holoenzyme is formed, which can initiate transcription.

The enzyme catalyses RNA(n) + a ribonucleoside 5'-triphosphate = RNA(n+1) + diphosphate. Functionally, DNA-dependent RNA polymerase catalyzes the transcription of DNA into RNA using the four ribonucleoside triphosphates as substrates. This Oceanobacillus iheyensis (strain DSM 14371 / CIP 107618 / JCM 11309 / KCTC 3954 / HTE831) protein is DNA-directed RNA polymerase subunit alpha.